We begin with the raw amino-acid sequence, 373 residues long: MKLSDISAKLGCALEGDGQVDIVGIAGIEEAEAGHLTFLSNPKYKAKLRHTKASAAIVPADFEASAAWPLPLLRHANPYLTFAHAIELFYSPPPAPHGVHPTAVVAPTAVCGHNVRIGASSVIGEGVVLADGVTVYPNCTIYPGVRIGRNSTIHSNCVVREHVVIGEDCIVQNGAVIGADGFGYAKQADGTWYKIVQSGSVVLENRVEIGACTTVDRATIGETRIKSGSKLDNLVMIGHGSSVGENTLLCGQVGLAGSSTVGRNVMLAGQVGVAGHLHIGDNVVATVKSCIWKSVEANQVLYGNIPASDSHTWLKASAVFRQLPHMQKSVQQMQKRIAVLEEPFKTNGKSGQADAPPKVALECHGTTGDAPQG.

H239 (proton acceptor) is an active-site residue. Residues 345 to 373 are disordered; sequence KTNGKSGQADAPPKVALECHGTTGDAPQG.

This sequence belongs to the transferase hexapeptide repeat family. LpxD subfamily. As to quaternary structure, homotrimer.

It carries out the reaction a UDP-3-O-[(3R)-3-hydroxyacyl]-alpha-D-glucosamine + a (3R)-hydroxyacyl-[ACP] = a UDP-2-N,3-O-bis[(3R)-3-hydroxyacyl]-alpha-D-glucosamine + holo-[ACP] + H(+). Its pathway is bacterial outer membrane biogenesis; LPS lipid A biosynthesis. Catalyzes the N-acylation of UDP-3-O-acylglucosamine using 3-hydroxyacyl-ACP as the acyl donor. Is involved in the biosynthesis of lipid A, a phosphorylated glycolipid that anchors the lipopolysaccharide to the outer membrane of the cell. The chain is UDP-3-O-acylglucosamine N-acyltransferase 2 from Gloeobacter violaceus (strain ATCC 29082 / PCC 7421).